A 176-amino-acid chain; its full sequence is uncharacterized protein (176 aa).

Positions 87-100 are enriched in low complexity; the sequence is ASASSQLRASRVQS. The segment at 87–109 is disordered; the sequence is ASASSQLRASRVQSGTRQSARAG.

This is an uncharacterized protein from Homo sapiens (Human).